The primary structure comprises 118 residues: Flowering-promoting factor 1-like protein 4 (118 aa).

This sequence belongs to the FPF1 family.

This is Flowering-promoting factor 1-like protein 4 from Oryza sativa subsp. japonica (Rice).